The chain runs to 57 residues: Large ribosomal subunit protein bL32 (57 aa).

This sequence belongs to the bacterial ribosomal protein bL32 family.

This chain is Large ribosomal subunit protein bL32, found in Staphylococcus aureus (strain MSSA476).